The following is a 119-amino-acid chain: Immunoglobulin lambda variable 2-11 (119 aa).

The signal sequence occupies residues 1–19; the sequence is MAWALLLLSLLTQGTGSWA. Glutamine 20 is subject to Pyrrolidone carboxylic acid. Residues 20–44 form a framework-1 region; sequence QSALTQPRSVSGSPGQSVTISCTGT. The Ig-like domain maps to 20–119; that stretch reads QSALTQPRSV…CSYAGSYTFH (100 aa). A disulfide bridge connects residues cysteine 41 and cysteine 109. Residues 45-53 are complementarity-determining-1; it reads SSDVGGYNY. The segment at 54 to 70 is framework-2; it reads VSWYQQHPGKAPKLMIY. A complementarity-determining-2 region spans residues 71 to 73; that stretch reads DVS. The framework-3 stretch occupies residues 74–109; that stretch reads KRPSGVPDRFSGSKSGNTASLTISGLQAEDEADYYC. Residues 110-119 are complementarity-determining-3; sequence CSYAGSYTFH.

As to quaternary structure, immunoglobulins are composed of two identical heavy chains and two identical light chains; disulfide-linked.

Its subcellular location is the secreted. The protein localises to the cell membrane. Its function is as follows. V region of the variable domain of immunoglobulin light chains that participates in the antigen recognition. Immunoglobulins, also known as antibodies, are membrane-bound or secreted glycoproteins produced by B lymphocytes. In the recognition phase of humoral immunity, the membrane-bound immunoglobulins serve as receptors which, upon binding of a specific antigen, trigger the clonal expansion and differentiation of B lymphocytes into immunoglobulins-secreting plasma cells. Secreted immunoglobulins mediate the effector phase of humoral immunity, which results in the elimination of bound antigens. The antigen binding site is formed by the variable domain of one heavy chain, together with that of its associated light chain. Thus, each immunoglobulin has two antigen binding sites with remarkable affinity for a particular antigen. The variable domains are assembled by a process called V-(D)-J rearrangement and can then be subjected to somatic hypermutations which, after exposure to antigen and selection, allow affinity maturation for a particular antigen. This Homo sapiens (Human) protein is Immunoglobulin lambda variable 2-11.